The primary structure comprises 417 residues: Glutamyl-tRNA reductase (417 aa).

Substrate-binding positions include 48–51, Ser100, 105–107, and Gln111; these read TCNR and EDQ. Cys49 (nucleophile) is an active-site residue. NADP(+) is bound at residue 180 to 185; that stretch reads GAGETG.

The protein belongs to the glutamyl-tRNA reductase family. In terms of assembly, homodimer.

It carries out the reaction (S)-4-amino-5-oxopentanoate + tRNA(Glu) + NADP(+) = L-glutamyl-tRNA(Glu) + NADPH + H(+). Its pathway is porphyrin-containing compound metabolism; protoporphyrin-IX biosynthesis; 5-aminolevulinate from L-glutamyl-tRNA(Glu): step 1/2. Catalyzes the NADPH-dependent reduction of glutamyl-tRNA(Glu) to glutamate 1-semialdehyde (GSA). This Methanothrix thermoacetophila (strain DSM 6194 / JCM 14653 / NBRC 101360 / PT) (Methanosaeta thermophila) protein is Glutamyl-tRNA reductase.